The primary structure comprises 571 residues: Proline--tRNA ligase (571 aa).

The protein belongs to the class-II aminoacyl-tRNA synthetase family. ProS type 1 subfamily. Homodimer.

The protein resides in the cytoplasm. It carries out the reaction tRNA(Pro) + L-proline + ATP = L-prolyl-tRNA(Pro) + AMP + diphosphate. Functionally, catalyzes the attachment of proline to tRNA(Pro) in a two-step reaction: proline is first activated by ATP to form Pro-AMP and then transferred to the acceptor end of tRNA(Pro). As ProRS can inadvertently accommodate and process non-cognate amino acids such as alanine and cysteine, to avoid such errors it has two additional distinct editing activities against alanine. One activity is designated as 'pretransfer' editing and involves the tRNA(Pro)-independent hydrolysis of activated Ala-AMP. The other activity is designated 'posttransfer' editing and involves deacylation of mischarged Ala-tRNA(Pro). The misacylated Cys-tRNA(Pro) is not edited by ProRS. The chain is Proline--tRNA ligase from Vibrio atlanticus (strain LGP32) (Vibrio splendidus (strain Mel32)).